The following is a 218-amino-acid chain: UPF0173 metal-dependent hydrolase Mpal_1063 (218 aa).

It belongs to the UPF0173 family.

This Methanosphaerula palustris (strain ATCC BAA-1556 / DSM 19958 / E1-9c) protein is UPF0173 metal-dependent hydrolase Mpal_1063.